The primary structure comprises 384 residues: Terpene cyclase ascI (384 aa).

The signal sequence occupies residues 1–25 (MPQLAGKLILAGLIPLGAWVLHGFA). Residues 82-102 (LSLHAFMFAGQGVPLLVLNML) form a helical membrane-spanning segment. A glycan (N-linked (GlcNAc...) asparagine) is linked at asparagine 109. Transmembrane regions (helical) follow at residues 119 to 139 (VFGI…YLFL), 164 to 184 (AVGF…SLPH), 194 to 214 (VLSV…AYFA), and 235 to 255 (GAVY…TFAI). N-linked (GlcNAc...) asparagine glycosylation occurs at asparagine 258. A run of 2 helical transmembrane segments spans residues 291–311 (WFLQ…AIGI) and 330–350 (IALR…ALSL). Residue asparagine 372 is glycosylated (N-linked (GlcNAc...) asparagine).

The protein belongs to the membrane-bound ascI terpene cyclase family.

The protein resides in the membrane. The catalysed reaction is 16-hydroxy-ilicicolin A epoxide = ascofuranol. The protein operates within secondary metabolite biosynthesis; terpenoid biosynthesis. In terms of biological role, epoxide hydrolase; part of the asc-2 gene cluster that mediates the biosynthesis of ascofuranone, a strong inhibitor of cyanide-insensitive alternative oxidases and a promising drug candidate against African trypanosomiasis. The first step in the pathway is performed by the non-reducing polyketide synthase ascC that produces orsellinic acid by condensing acetyl-CoA with 3 malonyl-CoA units. Orsellinic acid is then prenylated by the prenyltransferase ascA to yield ilicicolinic acid B. Ilicicolinic acid B is further reduced to ilicicolin B by the reductase ascB. The halogenase ascD then chlorinates ilicicolin B to produce ilicicolin A which is converted to ilicicolin A epoxide by the cytochrome P450 monooxygenase ascE that catalyzes stereoselective epoxidation of the terminal double bond of the prenyl group. Ilicicolin A epoxide is the last common precursor for the biosynthesis of ascofuranone and ascochlorin. The terpene cyclase ascF produces a monocyclic terpene, and the cyclization reaction is proposed to be initiated by protonation of the terminal epoxide of ilicicolin A epoxide to generate a monocyclic tertiarycation, which is followed by a series of hydride and methyl shifts with abstraction of proton, leading to the formation of the (14S,15R,19R)-trimethylcyclohexanone ring structure of ilicicolin C, which is finally reduced to ascochlorin by the dehydrogenase ascG. On the other hand, ilicicolin A epoxide is hydroxylated by the cytochrome P450 monooxygenase ascH, and the resultant product is cyclized by the terpene cyclase ascI to ascofuranol via protonation-initiated epoxide ring opening, which facilitates the 6-endo-tet cyclization to form the tetrahy-drofuran ring. Finally, ascofuranol is oxidized into ascofuranone by ascJ. The protein is Terpene cyclase ascI of Acremonium egyptiacum (Oospora egyptiaca).